A 198-amino-acid chain; its full sequence is Dephospho-CoA kinase (198 aa).

The DPCK domain maps to 2-90 (LIAIVGKPGV…KLSLVTKPLL (89 aa)). 10-15 (GVGKTS) contacts ATP.

This sequence belongs to the CoaE family.

The protein localises to the cytoplasm. It catalyses the reaction 3'-dephospho-CoA + ATP = ADP + CoA + H(+). The protein operates within cofactor biosynthesis; coenzyme A biosynthesis; CoA from (R)-pantothenate: step 5/5. Functionally, catalyzes the phosphorylation of the 3'-hydroxyl group of dephosphocoenzyme A to form coenzyme A. This is Dephospho-CoA kinase from Mycoplasma genitalium (strain ATCC 33530 / DSM 19775 / NCTC 10195 / G37) (Mycoplasmoides genitalium).